A 398-amino-acid polypeptide reads, in one-letter code: Glucose-1-phosphate adenylyltransferase (398 aa).

Alpha-D-glucose 1-phosphate-binding positions include Tyr100, Gly165, 180 to 181 (EK), and Ser191.

The protein belongs to the bacterial/plant glucose-1-phosphate adenylyltransferase family. In terms of assembly, homotetramer.

It catalyses the reaction alpha-D-glucose 1-phosphate + ATP + H(+) = ADP-alpha-D-glucose + diphosphate. It participates in glycan biosynthesis; glycogen biosynthesis. Involved in the biosynthesis of ADP-glucose, a building block required for the elongation reactions to produce glycogen. Catalyzes the reaction between ATP and alpha-D-glucose 1-phosphate (G1P) to produce pyrophosphate and ADP-Glc. This is Glucose-1-phosphate adenylyltransferase from Desulfitobacterium hafniense (strain Y51).